Reading from the N-terminus, the 1190-residue chain is Pyruvate-flavodoxin oxidoreductase (1190 aa).

4Fe-4S ferredoxin-type domains are found at residues 687-716 (EIPV…SKVY) and 743-773 (FTIQ…PRKK). C696, C699, C702, C706, C752, C755, C758, C762, C826, C829, C854, and C1089 together coordinate [4Fe-4S] cluster.

Belongs to the pyruvate:ferredoxin/flavodoxin oxidoreductase family. Requires [4Fe-4S] cluster as cofactor.

The catalysed reaction is oxidized [flavodoxin] + pyruvate + CoA + 2 H(+) = reduced [flavodoxin] + acetyl-CoA + CO2. In terms of biological role, oxidoreductase required for the transfer of electrons from pyruvate to flavodoxin, which reduces nitrogenase. In Trichormus variabilis (strain ATCC 29413 / PCC 7937) (Anabaena variabilis), this protein is Pyruvate-flavodoxin oxidoreductase (nifJ).